Here is a 127-residue protein sequence, read N- to C-terminus: Small ribosomal subunit protein uS11 (127 aa).

The protein belongs to the universal ribosomal protein uS11 family. Part of the 30S ribosomal subunit. Interacts with proteins S7 and S18. Binds to IF-3.

Its function is as follows. Located on the platform of the 30S subunit, it bridges several disparate RNA helices of the 16S rRNA. Forms part of the Shine-Dalgarno cleft in the 70S ribosome. The sequence is that of Small ribosomal subunit protein uS11 from Rickettsia prowazekii (strain Madrid E).